The sequence spans 867 residues: cGMP-dependent 3',5'-cGMP phosphodiesterase A (867 aa).

A compositionally biased stretch (low complexity) spans 121–146 (IINSSSSTTDTSKTSPIKKQTSSSSP). 2 disordered regions span residues 121 to 167 (IINS…SQQQ) and 180 to 241 (HHHH…STFP). Residues 147 to 160 (PLSPQQQQPPPPLV) are compositionally biased toward pro residues. Residues 191–220 (NDNNNNTTTNNNNIEILEQQQQQQQQQQQQ) are compositionally biased toward low complexity. A compositionally biased stretch (acidic residues) spans 221–232 (QDEDSTDVDEEF). The segment at 357-503 (STTGFVLWIN…GDTCYDPNRI (147 aa)) is phosphodiesterase activity. Histidine 399, histidine 401, and aspartate 403 together coordinate a divalent metal cation. Residues 607 to 721 (IFRS…WEMR) and 734 to 851 (VFSR…IFVD) each bind a nucleoside 3',5'-cyclic phosphate.

The protein belongs to the metallo-beta-lactamase superfamily. cNMP phosphodiesterase family. The cofactor is Mn(2+). Requires Mg(2+) as cofactor. Zn(2+) serves as cofactor.

The protein localises to the cytoplasm. The protein resides in the cytosol. The catalysed reaction is 3',5'-cyclic GMP + H2O = GMP + H(+). Its function is as follows. Phosphodiesterase specific for cGMP, which is activated by cGMP but not by cAMP. Involved in the degradation of intracellular cGMP, contributes to the control of cGMP signals. The protein is cGMP-dependent 3',5'-cGMP phosphodiesterase A (pdeD) of Dictyostelium discoideum (Social amoeba).